The following is a 359-amino-acid chain: Fructose-bisphosphate aldolase (359 aa).

Residue Ser62 coordinates D-glyceraldehyde 3-phosphate. Asp109 functions as the Proton donor in the catalytic mechanism. Zn(2+) contacts are provided by His110, Asp144, Glu174, and His226. Residue Gly227 participates in dihydroxyacetone phosphate binding. Residue His265 coordinates Zn(2+). Dihydroxyacetone phosphate contacts are provided by residues 266-268 and 287-290; these read GGS and NLDT.

Belongs to the class II fructose-bisphosphate aldolase family. In terms of assembly, homodimer. Requires Zn(2+) as cofactor.

It localises to the cytoplasm. The catalysed reaction is beta-D-fructose 1,6-bisphosphate = D-glyceraldehyde 3-phosphate + dihydroxyacetone phosphate. It participates in carbohydrate degradation; glycolysis; D-glyceraldehyde 3-phosphate and glycerone phosphate from D-glucose: step 4/4. Catalyzes the aldol condensation of dihydroxyacetone phosphate (DHAP or glycerone-phosphate) with glyceraldehyde 3-phosphate (G3P) to form fructose 1,6-bisphosphate (FBP) in gluconeogenesis and the reverse reaction in glycolysis. The chain is Fructose-bisphosphate aldolase (FBA1) from Candida albicans (strain SC5314 / ATCC MYA-2876) (Yeast).